We begin with the raw amino-acid sequence, 206 residues long: MALCGSSKGRGRGRPIQRKVVVCGDGACGKTSLLNVFTRGFFTQVYEPTVFENYVHDLYIDDQLVELSLWDTAGQEEFDRLRSLSYAETHVIMICFSVDNPTSLENVESKWLDEILEYCPGVKLVLVDSKCDLRDDPAVLDRLQRYGTHTDQYEEGLGVARRIRASRYLECSSKHNRGVNEVFLRGRARVTVHSIRQGSAGSCCVM.

GTP is bound at residue Gly-24–Thr-31. Positions Tyr-46–Tyr-54 match the Effector region motif. GTP is bound by residues Asp-71–Gln-75 and Ser-129–Asp-132. At Cys-203 the chain carries Cysteine methyl ester. The S-geranylgeranyl cysteine moiety is linked to residue Cys-203. Residues Cys-204–Met-206 constitute a propeptide, removed in mature form.

It belongs to the small GTPase superfamily. Rho family.

Its subcellular location is the cell membrane. The protein is GTP-binding protein Rho3 (RHO3) of Schizophyllum commune (Split gill fungus).